We begin with the raw amino-acid sequence, 311 residues long: 4-hydroxy-tetrahydrodipicolinate synthase (311 aa).

Threonine 49 contacts pyruvate. Tyrosine 138 functions as the Proton donor/acceptor in the catalytic mechanism. Lysine 166 serves as the catalytic Schiff-base intermediate with substrate. Valine 207 is a pyruvate binding site.

The protein belongs to the DapA family. As to quaternary structure, homotetramer; dimer of dimers.

Its subcellular location is the cytoplasm. The catalysed reaction is L-aspartate 4-semialdehyde + pyruvate = (2S,4S)-4-hydroxy-2,3,4,5-tetrahydrodipicolinate + H2O + H(+). It participates in amino-acid biosynthesis; L-lysine biosynthesis via DAP pathway; (S)-tetrahydrodipicolinate from L-aspartate: step 3/4. Its function is as follows. Catalyzes the condensation of (S)-aspartate-beta-semialdehyde [(S)-ASA] and pyruvate to 4-hydroxy-tetrahydrodipicolinate (HTPA). In Lactobacillus helveticus (strain DPC 4571), this protein is 4-hydroxy-tetrahydrodipicolinate synthase.